The primary structure comprises 447 residues: Tubulin beta-1 chain (447 aa).

Residues glutamine 11, glutamate 69, serine 138, glycine 142, threonine 143, glycine 144, asparagine 204, and asparagine 226 each contribute to the GTP site. Glutamate 69 is a binding site for Mg(2+).

It belongs to the tubulin family. In terms of assembly, dimer of alpha and beta chains. A typical microtubule is a hollow water-filled tube with an outer diameter of 25 nm and an inner diameter of 15 nM. Alpha-beta heterodimers associate head-to-tail to form protofilaments running lengthwise along the microtubule wall with the beta-tubulin subunit facing the microtubule plus end conferring a structural polarity. Microtubules usually have 13 protofilaments but different protofilament numbers can be found in some organisms and specialized cells. The cofactor is Mg(2+).

The protein resides in the cytoplasm. It localises to the cytoskeleton. Functionally, tubulin is the major constituent of microtubules, a cylinder consisting of laterally associated linear protofilaments composed of alpha- and beta-tubulin heterodimers. Microtubules grow by the addition of GTP-tubulin dimers to the microtubule end, where a stabilizing cap forms. Below the cap, tubulin dimers are in GDP-bound state, owing to GTPase activity of alpha-tubulin. The protein is Tubulin beta-1 chain of Geotrichum candidum (Oospora lactis).